Here is a 2371-residue protein sequence, read N- to C-terminus: Highly reducing polyketide synthase ntnH (2371 aa).

The Ketosynthase family 3 (KS3) domain occupies 10 to 429 (PSPIAIVGIG…GANAHVILEG (420 aa)). Catalysis depends on for beta-ketoacyl synthase activity residues C180, H316, and H352. The interval 528–796 (FIFTGQGAQW…NSCLSRGADA (269 aa)) is malonyl-CoA:ACP transacylase (MAT) domain. The N-terminal hotdog fold stretch occupies residues 858-986 (HELLGARVIG…GKVHPGNAST (129 aa)). Residues 858-1142 (HELLGARVIG…GIRFRILENN (285 aa)) form a dehydratase (DH) domain region. The PKS/mFAS DH domain maps to 858–1145 (HELLGARVIG…FRILENNRSK (288 aa)). Residue H890 is the Proton acceptor; for dehydratase activity of the active site. The interval 1001 to 1145 (VRGVISAKWY…FRILENNRSK (145 aa)) is C-terminal hotdog fold. The active-site Proton donor; for dehydratase activity is the D1059. The tract at residues 1309–1456 (FFQLLGHNKK…FENVTAIMDQ (148 aa)) is methyltransferase (CMet) domain. The segment at 1669–1968 (GLLSSLQWQG…GHRPIGAICI (300 aa)) is enoyl reductase (ER) (ER) domain. A ketoreductase (KR) domain region spans residues 1993–2167 (SYVLIGGLGG…ASVIDLGVME (175 aa)). Positions 2280–2362 (EDETAVAEFL…DLGKLARSRI (83 aa)) constitute a Carrier domain. S2322 bears the O-(pantetheine 4'-phosphoryl)serine mark.

It functions in the pathway secondary metabolite biosynthesis; terpenoid biosynthesis. In terms of biological role, highly reducing polyketide synthase; part of the gene cluster that mediates the biosynthesis of the meroterpenoids nectripenoids A and B, as well as cochliquninone D and isocochliquninone E. The pathway probably begins with the HR-PKS ntnH that catalyzes two chain-extension steps to form a reduced triketide, which then primes the SAT domain in the NR-PKS ntnG to initiate three more cycles of extension to give a linear hexaketide corresponding to the polyketide part of nectripenoids. The FAD-dependent monooxygenase ntnJ then performs an oxidative decarboxylation at C11 of the ntnH/ntnG product, via an electrophilic aromatic hydroxylation with concomitant ipso-decarboxylation. The membrane-bound polyprenyl transferase ntnF then introduces a farnesyl group before the FAD-dependent monooxygenase ntnK functions as the first epoxidase on terminal C12'-C13' olefin, followed by a second epoxidation on C7'-C8' catalyzed by ntnA. The terpene cyclase/mutase ntnI then initiates the sequential tricyclic ring formation through protonation of the terminal epoxide and catalyzes the regioselective and stereoselective 6/6/6-tricyclic ring formation. The cytochrome P450 monooxygenase ntnM may then hydroxylate C1'. This is Highly reducing polyketide synthase ntnH from Nectria sp.